Consider the following 1079-residue polypeptide: Tudor domain-containing protein 7A (1079 aa).

In terms of domain architecture, HTH OST-type 1 spans 3–76; that stretch reads DVELVKKMLR…TGEVMCFAGV (74 aa). Residues 153–175 form a disordered region; that stretch reads LPSSRAPAWQMNRKSPVPEKTSV. 2 HTH OST-type domains span residues 205–270 and 366–434; these read DVEL…RLVY and LTTE…ILYT. Tudor domains lie at 519–576 and 708–765; these read SPKI…FMTL and RPFC…FLKE.

It belongs to the TDRD7 family.

It localises to the cytoplasm. Functionally, component of specific cytoplasmic RNA granules involved in post-transcriptional regulation of specific genes: probably acts by binding to specific mRNAs and regulating their translation. Probably required during spermatogenesis. Required for structural integrity of granules in primordial germ cells (PGCs). In Danio rerio (Zebrafish), this protein is Tudor domain-containing protein 7A (tdrd7a).